A 313-amino-acid chain; its full sequence is Homoserine O-succinyltransferase (313 aa).

Catalysis depends on Cys-142, which acts as the Acyl-thioester intermediate. 2 residues coordinate substrate: Lys-163 and Ser-192. His-235 functions as the Proton acceptor in the catalytic mechanism. Residue Glu-237 is part of the active site. Arg-249 provides a ligand contact to substrate.

It belongs to the MetA family.

It is found in the cytoplasm. The catalysed reaction is L-homoserine + succinyl-CoA = O-succinyl-L-homoserine + CoA. It functions in the pathway amino-acid biosynthesis; L-methionine biosynthesis via de novo pathway; O-succinyl-L-homoserine from L-homoserine: step 1/1. Transfers a succinyl group from succinyl-CoA to L-homoserine, forming succinyl-L-homoserine. This is Homoserine O-succinyltransferase from Shewanella oneidensis (strain ATCC 700550 / JCM 31522 / CIP 106686 / LMG 19005 / NCIMB 14063 / MR-1).